The sequence spans 96 residues: Probable RNA-binding protein YqeI (96 aa).

Residues 1–96 (MLTGKQKRFL…SKENKQIELP (96 aa)) form the CRM domain.

The chain is Probable RNA-binding protein YqeI (yqeI) from Bacillus subtilis (strain 168).